The chain runs to 90 residues: Inactive casein kinase II subunit alpha-2 (90 aa).

ATP contacts are provided by residues 40 to 48 and lysine 63; that span reads VGRGKYSEV.

This sequence belongs to the protein kinase superfamily. Ser/Thr protein kinase family. CK2 subfamily.

In terms of biological role, the Nipponbare allele of HD6 contains a premature stop codon, resulting in a truncated non-functional product. This chain is Inactive casein kinase II subunit alpha-2, found in Oryza sativa subsp. japonica (Rice).